Consider the following 188-residue polypeptide: Crossover junction endodeoxyribonuclease RuvC (188 aa).

Active-site residues include Asp7, Glu68, and Asp141. Mg(2+)-binding residues include Asp7, Glu68, and Asp141.

The protein belongs to the RuvC family. As to quaternary structure, homodimer which binds Holliday junction (HJ) DNA. The HJ becomes 2-fold symmetrical on binding to RuvC with unstacked arms; it has a different conformation from HJ DNA in complex with RuvA. In the full resolvosome a probable DNA-RuvA(4)-RuvB(12)-RuvC(2) complex forms which resolves the HJ. Mg(2+) serves as cofactor.

It is found in the cytoplasm. It catalyses the reaction Endonucleolytic cleavage at a junction such as a reciprocal single-stranded crossover between two homologous DNA duplexes (Holliday junction).. Its function is as follows. The RuvA-RuvB-RuvC complex processes Holliday junction (HJ) DNA during genetic recombination and DNA repair. Endonuclease that resolves HJ intermediates. Cleaves cruciform DNA by making single-stranded nicks across the HJ at symmetrical positions within the homologous arms, yielding a 5'-phosphate and a 3'-hydroxyl group; requires a central core of homology in the junction. The consensus cleavage sequence is 5'-(A/T)TT(C/G)-3'. Cleavage occurs on the 3'-side of the TT dinucleotide at the point of strand exchange. HJ branch migration catalyzed by RuvA-RuvB allows RuvC to scan DNA until it finds its consensus sequence, where it cleaves and resolves the cruciform DNA. The chain is Crossover junction endodeoxyribonuclease RuvC from Mycobacterium leprae (strain TN).